An 88-amino-acid chain; its full sequence is FAD assembly factor SdhE (88 aa).

Belongs to the SdhE FAD assembly factor family. As to quaternary structure, monomer. Makes weak or transient interactions with SdhA. Interacts with YgfX. Interacts with FrdA.

It is found in the cytoplasm. It functions in the pathway antibiotic biosynthesis; prodigiosin biosynthesis. An FAD assembly protein, which accelerates covalent attachment of the cofactor into other proteins. Plays an essential role in the assembly of succinate dehydrogenase (SDH, respiratory complex II), an enzyme complex that is a component of both the tricarboxylic acid cycle and the electron transport chain, and which couples the oxidation of succinate to fumarate with the reduction of ubiquinone (coenzyme Q) to ubiquinol. Required for flavinylation (covalent attachment of FAD) of the flavoprotein subunit SdhA of SDH. Required for flavinylation of the flavoprotein subunit FrdA of fumarate reductase (FRD). Flavinylation of SDH and FRD occurs in a similar but not identical manner, as site-specific mutations display subtle differences between them. Flavinylates SdhA in vivo in the absence of the other SDH subunits; SdhE mutants that do not flavinylate also interfere with wild-type activity in a possible dominant-negative fashion. Weakly binds to FAD and facilitates its binding to SdhA. Required for production of prodigiosin antibiotic (Pig); overproduction of SdhE in a deletion mutant leads to decreased synthesis of Pig compared to wild-type. Capable of flavinylating A.pasteurianus SdhA when the SDH operon and this gene are expressed in G.oxydans; flavinylation of SdhA is detected only in the presence of sdhE. The sequence is that of FAD assembly factor SdhE from Serratia sp. (strain ATCC 39006) (Prodigiosinella confusarubida).